A 117-amino-acid polypeptide reads, in one-letter code: Iron-sulfur cluster insertion protein ErpA (117 aa).

Cys45, Cys109, and Cys111 together coordinate iron-sulfur cluster.

It belongs to the HesB/IscA family. In terms of assembly, homodimer. Iron-sulfur cluster serves as cofactor.

Functionally, required for insertion of 4Fe-4S clusters for at least IspG. The chain is Iron-sulfur cluster insertion protein ErpA from Hahella chejuensis (strain KCTC 2396).